A 246-amino-acid polypeptide reads, in one-letter code: Exosome complex component Rrp41 (246 aa).

The protein belongs to the RNase PH family. Rrp41 subfamily. Component of the archaeal exosome complex. Forms a hexameric ring-like arrangement composed of 3 Rrp41-Rrp42 heterodimers. The hexameric ring associates with a trimer of Rrp4 and/or Csl4 subunits.

It localises to the cytoplasm. In terms of biological role, catalytic component of the exosome, which is a complex involved in RNA degradation. Has 3'-&gt;5' exoribonuclease activity. Can also synthesize heteromeric RNA-tails. This chain is Exosome complex component Rrp41, found in Pyrobaculum islandicum (strain DSM 4184 / JCM 9189 / GEO3).